A 302-amino-acid chain; its full sequence is Glutaminase (302 aa).

Substrate contacts are provided by Ser-61, Asn-111, Glu-155, Asn-162, Tyr-186, Tyr-238, and Val-256.

The protein belongs to the glutaminase family. In terms of assembly, homotetramer.

The catalysed reaction is L-glutamine + H2O = L-glutamate + NH4(+). The protein is Glutaminase of Pseudomonas savastanoi pv. phaseolicola (strain 1448A / Race 6) (Pseudomonas syringae pv. phaseolicola (strain 1448A / Race 6)).